A 243-amino-acid polypeptide reads, in one-letter code: Carboxy-S-adenosyl-L-methionine synthase (243 aa).

S-adenosyl-L-methionine contacts are provided by residues Tyr39, 64–66, 89–90, 117–118, Asn132, and Arg199; these read GCS, DN, and DL.

The protein belongs to the class I-like SAM-binding methyltransferase superfamily. Cx-SAM synthase family. As to quaternary structure, homodimer.

The catalysed reaction is prephenate + S-adenosyl-L-methionine = carboxy-S-adenosyl-L-methionine + 3-phenylpyruvate + H2O. Catalyzes the conversion of S-adenosyl-L-methionine (SAM) to carboxy-S-adenosyl-L-methionine (Cx-SAM). The sequence is that of Carboxy-S-adenosyl-L-methionine synthase from Pseudoalteromonas atlantica (strain T6c / ATCC BAA-1087).